Reading from the N-terminus, the 347-residue chain is SCA7 domain-containing protein SELMODRAFT_439258 (347 aa).

A signal peptide spans 1-13 (MCFFLSSLCPVVA). The disordered stretch occupies residues 77–106 (RAEVGGTGPKVGRPRKLSVYNPREMSDGNP). Residues 134 to 201 (QHLPFTVDDL…NNSRKSQQAD (68 aa)) enclose the SCA7 domain.

The chain is SCA7 domain-containing protein SELMODRAFT_439258 from Selaginella moellendorffii (Spikemoss).